The primary structure comprises 93 residues: Co-chaperonin GroES (93 aa).

It belongs to the GroES chaperonin family. As to quaternary structure, heptamer of 7 subunits arranged in a ring. Interacts with the chaperonin GroEL.

The protein localises to the cytoplasm. Its function is as follows. Together with the chaperonin GroEL, plays an essential role in assisting protein folding. The GroEL-GroES system forms a nano-cage that allows encapsulation of the non-native substrate proteins and provides a physical environment optimized to promote and accelerate protein folding. GroES binds to the apical surface of the GroEL ring, thereby capping the opening of the GroEL channel. The polypeptide is Co-chaperonin GroES (Streptococcus gordonii (strain Challis / ATCC 35105 / BCRC 15272 / CH1 / DL1 / V288)).